Here is a 530-residue protein sequence, read N- to C-terminus: Na(+)/H(+) antiporter NhaB (530 aa).

12 helical membrane-spanning segments follow: residues F13 to P33, L34 to F54, L90 to M110, I121 to F141, F145 to I165, L205 to P225, F241 to I261, G306 to I326, G327 to G347, E351 to I371, G455 to Y475, and M481 to L501.

The protein belongs to the NhaB Na(+)/H(+) (TC 2.A.34) antiporter family.

The protein localises to the cell inner membrane. It carries out the reaction 2 Na(+)(in) + 3 H(+)(out) = 2 Na(+)(out) + 3 H(+)(in). In terms of biological role, na(+)/H(+) antiporter that extrudes sodium in exchange for external protons. This Aliivibrio fischeri (strain MJ11) (Vibrio fischeri) protein is Na(+)/H(+) antiporter NhaB.